The primary structure comprises 352 residues: Probable cytosolic iron-sulfur protein assembly protein CIAO1 homolog (352 aa).

7 WD repeats span residues 12-51, 58-97, 106-145, 151-190, 195-234, 245-284, and 303-352; these read ASNK…LWGS, AHKK…SAPE, GHTS…DVQC, PHSQ…WTVF, GHDS…GKSS, YHTR…LTHI, and AHSE…EYEL.

Belongs to the WD repeat CIA1 family.

In terms of biological role, essential component of the cytosolic iron-sulfur (Fe/S) protein assembly machinery. Required for the maturation of extramitochondrial Fe/S proteins. This chain is Probable cytosolic iron-sulfur protein assembly protein CIAO1 homolog, found in Schistosoma japonicum (Blood fluke).